The chain runs to 104 residues: Integration host factor subunit beta (104 aa).

The protein belongs to the bacterial histone-like protein family. Heterodimer of an alpha and a beta chain.

Its function is as follows. This protein is one of the two subunits of integration host factor, a specific DNA-binding protein that functions in genetic recombination as well as in transcriptional and translational control. This chain is Integration host factor subunit beta, found in Xylella fastidiosa (strain M23).